Consider the following 807-residue polypeptide: DNA gyrase subunit B (807 aa).

The Toprim domain maps to 429-543 (SELFIVEGDS…KGYLYIAQPP (115 aa)). Mg(2+)-binding residues include E435, D508, and D510.

The protein belongs to the type II topoisomerase GyrB family. Heterotetramer, composed of two GyrA and two GyrB chains. In the heterotetramer, GyrA contains the active site tyrosine that forms a transient covalent intermediate with DNA, while GyrB binds cofactors and catalyzes ATP hydrolysis. It depends on Mg(2+) as a cofactor. Mn(2+) is required as a cofactor. Requires Ca(2+) as cofactor.

Its subcellular location is the cytoplasm. It carries out the reaction ATP-dependent breakage, passage and rejoining of double-stranded DNA.. A type II topoisomerase that negatively supercoils closed circular double-stranded (ds) DNA in an ATP-dependent manner to modulate DNA topology and maintain chromosomes in an underwound state. Negative supercoiling favors strand separation, and DNA replication, transcription, recombination and repair, all of which involve strand separation. Also able to catalyze the interconversion of other topological isomers of dsDNA rings, including catenanes and knotted rings. Type II topoisomerases break and join 2 DNA strands simultaneously in an ATP-dependent manner. This is DNA gyrase subunit B from Rickettsia conorii (strain ATCC VR-613 / Malish 7).